A 111-amino-acid chain; its full sequence is Ribonuclease P protein component (111 aa).

The protein belongs to the RnpA family. In terms of assembly, consists of a catalytic RNA component (M1 or rnpB) and a protein subunit.

The catalysed reaction is Endonucleolytic cleavage of RNA, removing 5'-extranucleotides from tRNA precursor.. Its function is as follows. RNaseP catalyzes the removal of the 5'-leader sequence from pre-tRNA to produce the mature 5'-terminus. It can also cleave other RNA substrates such as 4.5S RNA. The protein component plays an auxiliary but essential role in vivo by binding to the 5'-leader sequence and broadening the substrate specificity of the ribozyme. This is Ribonuclease P protein component from Alkaliphilus metalliredigens (strain QYMF).